The sequence spans 434 residues: MLSLTATTLSSSIFTQSKTHGFFNTRPVYRKPFTTITSALIPASNRQAPPKQQLYQPFRPPPSPIPPKFRSLDTAGKIEVLADRLGLWFEYAPLISSLYTEGFTPPSIEELTGISGVEQNSLIVGAQVRDSLVQSGAKPELIAAFDTNGAELLYEIRLLNTTQRVAAAEYIVDHGFDTKGAGDLARAIKDFPHRRGDVGLGDFDYNLPGDCLSFMLYRKSREHRSPSEIRTTLLEQALETAVTEKAKKAVLRELHGESEEERVKEEEIKIIRVPVVRLRFGEVAGASSVVVLPVCKAEEGEEKLLEAPMEFESGGEFGVVEAEKDWSRWVVLPGWDPVVAVRKGVAVSFSDDREVLPWNGKGEAIMVVIDREKKTVEADNGYYYLVVADGGMKLDRGLVLKEKGVNESLGMVVLVVRPPRDDDDEWQINDEDWD.

The N-terminal 51 residues, 1–51 (MLSLTATTLSSSIFTQSKTHGFFNTRPVYRKPFTTITSALIPASNRQAPPK), are a transit peptide targeting the chloroplast. The segment at 65-254 (IPPKFRSLDT…KAKKAVLREL (190 aa)) is N-terminal alpha-helix. The C-terminal beta sheet stretch occupies residues 273–419 (VPVVRLRFGE…GMVVLVVRPP (147 aa)).

It belongs to the RAF family. As to quaternary structure, homodimer.

It localises to the plastid. The protein localises to the chloroplast. Required for assembly or stability of RuBisCO. Acts at a postchaperonin step to fold and/or assemble the large subunit (rbcL) into RuBisCO. RAF1 binds first to a rbcL dimer (rbcL(2)), leading to a rbcL(8)-RAF1(4) complex formation. In the next step, RBCS displaces RAF1, thus resulting in holoenzyme formation. This Arabidopsis thaliana (Mouse-ear cress) protein is Rubisco accumulation factor 1.1, chloroplastic.